Here is a 484-residue protein sequence, read N- to C-terminus: Acetaldehyde dehydrogenase (acetylating) (484 aa).

This sequence belongs to the aldehyde dehydrogenase family.

It catalyses the reaction acetaldehyde + NAD(+) + CoA = acetyl-CoA + NADH + H(+). It functions in the pathway organosulfur degradation; alkanesulfonate degradation. Functionally, involved in an anaerobic respiration pathway that converts the sulfonate taurine (2-aminoethanesulfonate) to ammonia, acetate and sulfide. Catalyzes the oxidation of acetaldehyde to acetyl-CoA in the presence of CoASH and NAD(+). Highly prefers NAD(+) over NADP(+). In Bilophila wadsworthia (strain 3_1_6), this protein is Acetaldehyde dehydrogenase (acetylating).